Here is a 511-residue protein sequence, read N- to C-terminus: Ribose import ATP-binding protein RbsA (511 aa).

ABC transporter domains are found at residues 9–245 (FEAK…VGRD) and 261–506 (LRAE…LPRR). 41 to 48 (GENGAGKS) contacts ATP.

This sequence belongs to the ABC transporter superfamily. Ribose importer (TC 3.A.1.2.1) family. The complex is composed of an ATP-binding protein (RbsA), two transmembrane proteins (RbsC) and a solute-binding protein (RbsB).

The protein localises to the cell inner membrane. The enzyme catalyses D-ribose(out) + ATP + H2O = D-ribose(in) + ADP + phosphate + H(+). Its function is as follows. Part of the ABC transporter complex RbsABC involved in ribose import. Responsible for energy coupling to the transport system. The sequence is that of Ribose import ATP-binding protein RbsA from Rhodopirellula baltica (strain DSM 10527 / NCIMB 13988 / SH1).